We begin with the raw amino-acid sequence, 292 residues long: Glutamate racemase (292 aa).

Residues Asp28–Ser29 and Tyr60–Gly61 each bind substrate. Cys91 functions as the Proton donor/acceptor in the catalytic mechanism. Asn92–Thr93 contacts substrate. Cys200 serves as the catalytic Proton donor/acceptor. Residue Thr201–His202 participates in substrate binding.

It belongs to the aspartate/glutamate racemases family.

It catalyses the reaction L-glutamate = D-glutamate. Its pathway is cell wall biogenesis; peptidoglycan biosynthesis. In terms of biological role, provides the (R)-glutamate required for cell wall biosynthesis. In Nostoc sp. (strain PCC 7120 / SAG 25.82 / UTEX 2576), this protein is Glutamate racemase.